Reading from the N-terminus, the 813-residue chain is Molybdenum cofactor sulfurase (813 aa).

Lys228 bears the N6-(pyridoxal phosphate)lysine mark. Cys391 is an active-site residue. Residues 625–670 are disordered; sequence PSLRHAKAHMQKHQGPKRSAAIEKSSAHSFHDPPTPPDSDSENRKR. The span at 628 to 640 shows a compositional bias: basic residues; the sequence is RHAKAHMQKHQGP. Residues 648–812 form the MOSC domain; the sequence is KSSAHSFHDP…IKVGDKVSIG (165 aa).

It belongs to the class-V pyridoxal-phosphate-dependent aminotransferase family. MOCOS subfamily. It depends on pyridoxal 5'-phosphate as a cofactor.

The catalysed reaction is Mo-molybdopterin + L-cysteine + AH2 = thio-Mo-molybdopterin + L-alanine + A + H2O. Its function is as follows. Sulfurates the molybdenum cofactor. Sulfation of molybdenum is essential for xanthine dehydrogenase (XDH) and aldehyde oxidase (ADO) enzymes in which molybdenum cofactor is liganded by 1 oxygen and 1 sulfur atom in active form. This Botryotinia fuckeliana (strain B05.10) (Noble rot fungus) protein is Molybdenum cofactor sulfurase.